A 305-amino-acid chain; its full sequence is tRNA dimethylallyltransferase (305 aa).

14–21 serves as a coordination point for ATP; it reads GPTTSGKT. 16 to 21 contributes to the substrate binding site; the sequence is TTSGKT. 3 interaction with substrate tRNA regions span residues 39–42, 163–167, and 243–248; these read DSAL, QRITR, and RCVGYR.

Belongs to the IPP transferase family. Monomer. It depends on Mg(2+) as a cofactor.

It carries out the reaction adenosine(37) in tRNA + dimethylallyl diphosphate = N(6)-dimethylallyladenosine(37) in tRNA + diphosphate. In terms of biological role, catalyzes the transfer of a dimethylallyl group onto the adenine at position 37 in tRNAs that read codons beginning with uridine, leading to the formation of N6-(dimethylallyl)adenosine (i(6)A). The sequence is that of tRNA dimethylallyltransferase from Ruthia magnifica subsp. Calyptogena magnifica.